We begin with the raw amino-acid sequence, 253 residues long: Spermatogenesis-associated protein 9 (253 aa).

A helical transmembrane segment spans residues 144 to 166; it reads LTSIMCASYAALIYLTVCVNAVL. The segment covering 210-228 has biased composition (basic and acidic residues); the sequence is AKPYRSLPEKPDSISDRPK. Residues 210-231 are disordered; the sequence is AKPYRSLPEKPDSISDRPKLPA.

It localises to the membrane. Its function is as follows. May play at role in testicular development/spermatogenesis and may be an important factor in male infertility. In Bos taurus (Bovine), this protein is Spermatogenesis-associated protein 9 (SPATA9).